The sequence spans 153 residues: uncharacterized protein (153 aa).

An N-terminal signal peptide occupies residues 1-22; that stretch reads MKLLKKGTTVLFVMIMAVMLVA. Residue cysteine 23 is the site of N-palmitoyl cysteine attachment. Cysteine 23 is lipidated: S-diacylglycerol cysteine. Positions 121–153 are disordered; sequence LPGMASTGDVSKGISMKESEKMLKSQGFKEVEK. Positions 135-153 are enriched in basic and acidic residues; that stretch reads SMKESEKMLKSQGFKEVEK.

This sequence to E.coli YehR.

Its subcellular location is the cell membrane. This is an uncharacterized protein from Listeria innocua serovar 6a (strain ATCC BAA-680 / CLIP 11262).